A 100-amino-acid chain; its full sequence is NADH-quinone oxidoreductase subunit K (100 aa).

Transmembrane regions (helical) follow at residues Ile2 to Phe22, Ile28 to Ala48, and Phe64 to Phe84.

This sequence belongs to the complex I subunit 4L family. In terms of assembly, NDH-1 is composed of 14 different subunits. Subunits NuoA, H, J, K, L, M, N constitute the membrane sector of the complex.

Its subcellular location is the cell inner membrane. The enzyme catalyses a quinone + NADH + 5 H(+)(in) = a quinol + NAD(+) + 4 H(+)(out). In terms of biological role, NDH-1 shuttles electrons from NADH, via FMN and iron-sulfur (Fe-S) centers, to quinones in the respiratory chain. The immediate electron acceptor for the enzyme in this species is believed to be ubiquinone. Couples the redox reaction to proton translocation (for every two electrons transferred, four hydrogen ions are translocated across the cytoplasmic membrane), and thus conserves the redox energy in a proton gradient. This is NADH-quinone oxidoreductase subunit K from Desulfovibrio desulfuricans (strain ATCC 27774 / DSM 6949 / MB).